Consider the following 305-residue polypeptide: Phosphoinositol dihydroceramide synthase (305 aa).

The first 23 residues, 1 to 23 (MPSKKETLTVIVIMALFLLLTAA), serve as a signal peptide directing secretion. Cys24 is lipidated: N-palmitoyl cysteine. A lipid anchor (S-diacylglycerol cysteine) is attached at Cys24. Helical transmembrane passes span 41–61 (LFFA…FAIF), 117–137 (VFAG…GLCL), 149–169 (FALV…IHPA), 216–236 (FAAV…YAII), 241–261 (WYVI…AIYS), and 266–286 (IIDV…FEYG).

The protein localises to the membrane. The catalysed reaction is N-(2-hydroxy-fatty acyl)-dihydroceramide + a 1,2-diacyl-sn-glycero-3-phospho-(1D-myo-inositol) = inositol-1-phospho-N-(2-hydroxy-fatty acyl)-dihydroceramide + a 1,2-diacyl-sn-glycerol. In terms of biological role, catalyzes the addition of a phosphorylinositol group onto dihydroceramide to form phosphoinositol dihydroceramide (PI-DHC), an essential step in sphingolipid biosynthesis. The protein is Phosphoinositol dihydroceramide synthase of Bacteroides thetaiotaomicron (strain ATCC 29148 / DSM 2079 / JCM 5827 / CCUG 10774 / NCTC 10582 / VPI-5482 / E50).